A 906-amino-acid chain; its full sequence is Protein translocase subunit SecA (906 aa).

Residues Q87, 105–109 (GEGKT), and D512 contribute to the ATP site. Residues 875–897 (VTFVRDEQKVGRNDPCPCGSGKK) are disordered. The Zn(2+) site is built by C890, C892, C901, and H902.

The protein belongs to the SecA family. In terms of assembly, monomer and homodimer. Part of the essential Sec protein translocation apparatus which comprises SecA, SecYEG and auxiliary proteins SecDF-YajC and YidC. Zn(2+) is required as a cofactor.

The protein localises to the cell inner membrane. It localises to the cytoplasm. It carries out the reaction ATP + H2O + cellular proteinSide 1 = ADP + phosphate + cellular proteinSide 2.. Functionally, part of the Sec protein translocase complex. Interacts with the SecYEG preprotein conducting channel. Has a central role in coupling the hydrolysis of ATP to the transfer of proteins into and across the cell membrane, serving both as a receptor for the preprotein-SecB complex and as an ATP-driven molecular motor driving the stepwise translocation of polypeptide chains across the membrane. The chain is Protein translocase subunit SecA from Aeromonas hydrophila subsp. hydrophila (strain ATCC 7966 / DSM 30187 / BCRC 13018 / CCUG 14551 / JCM 1027 / KCTC 2358 / NCIMB 9240 / NCTC 8049).